We begin with the raw amino-acid sequence, 147 residues long: Deoxyuridine 5'-triphosphate nucleotidohydrolase (147 aa).

Substrate is bound by residues 63-65 (RSG), asparagine 76, and 80-82 (TID).

It belongs to the dUTPase family. It depends on Mg(2+) as a cofactor.

It catalyses the reaction dUTP + H2O = dUMP + diphosphate + H(+). The protein operates within pyrimidine metabolism; dUMP biosynthesis; dUMP from dCTP (dUTP route): step 2/2. In terms of biological role, this enzyme is involved in nucleotide metabolism: it produces dUMP, the immediate precursor of thymidine nucleotides and it decreases the intracellular concentration of dUTP so that uracil cannot be incorporated into DNA. The polypeptide is Deoxyuridine 5'-triphosphate nucleotidohydrolase (Chlamydia abortus (strain DSM 27085 / S26/3) (Chlamydophila abortus)).